A 535-amino-acid polypeptide reads, in one-letter code: Glutamate--cysteine ligase (535 aa).

It belongs to the glutamate--cysteine ligase type 1 family. Type 1 subfamily.

It carries out the reaction L-cysteine + L-glutamate + ATP = gamma-L-glutamyl-L-cysteine + ADP + phosphate + H(+). The protein operates within sulfur metabolism; glutathione biosynthesis; glutathione from L-cysteine and L-glutamate: step 1/2. This Pseudomonas savastanoi pv. phaseolicola (strain 1448A / Race 6) (Pseudomonas syringae pv. phaseolicola (strain 1448A / Race 6)) protein is Glutamate--cysteine ligase.